The following is a 2027-amino-acid chain: Dedicator of cytokinesis protein 3 (2027 aa).

Residues 6–67 (EEEKYGVVIC…PANYIHLKKA (62 aa)) enclose the SH3 domain. The C2 DOCK-type domain occupies 421 to 598 (RNDLYLTLEK…ESFFISTQLS (178 aa)). The DOCKER domain maps to 1225-1632 (KSEINKEEMY…LYHEFPGLDK (408 aa)). Ser-1655 carries the phosphoserine modification. Disordered regions lie at residues 1672-1695 (GTGR…MMMM), 1731-1768 (SSSQ…SLPD), 1846-1925 (DTPP…DEGL), and 1971-2027 (PPKP…RGEQ). 2 stretches are compositionally biased toward low complexity: residues 1676 to 1695 (HSSS…MMMM) and 1731 to 1751 (SSSQ…APSQ). A compositionally biased stretch (polar residues) spans 1752 to 1763 (MITSAPSSTRGS). Residues 1877–1899 (GSNSTLSGSASSGVSSLSESNFG) show a composition bias toward low complexity. The SH3-binding signature appears at 1967–1973 (PPALPPK). 2 stretches are compositionally biased toward basic and acidic residues: residues 1981-1998 (ALEH…ERPR) and 2011-2027 (VKEE…RGEQ).

Belongs to the DOCK family. In terms of assembly, interacts with presenilin proteins PSEN1 and PSEN2. Interacts with CRK. In terms of tissue distribution, expressed in brain, spinal cord, pituitary gland, testis. Not expressed in heart, liver, kidney, spleen and lung. In brain, it is highly expressed in the cerebral cortex and hippocampus, while it is absent in other tissues, except in spinal cord. In the cerebral cortex, it is found within the intermediate (III and IV) and deep (V and VI) layers, whereas it is weakly expressed in superficial layer I. It is also abundant in the piriform cortex. Within the hippocampus, it is expressed in the pyramidal neurons of the CA1, CA2, and CA3 regions and the dentate gyrus.

The protein localises to the cytoplasm. In terms of biological role, potential guanine nucleotide exchange factor (GEF). GEF proteins activate some small GTPases by exchanging bound GDP for free GTP. Its interaction with presenilin proteins as well as its ability to stimulate Tau/MAPT phosphorylation suggest that it may be involved in Alzheimer disease. Ectopic expression in nerve cells decreases the secretion of amyloid-beta APBA1 protein and lowers the rate of cell-substratum adhesion, suggesting that it may affect the function of some small GTPase involved in the regulation of actin cytoskeleton or cell adhesion receptors. The protein is Dedicator of cytokinesis protein 3 (Dock3) of Mus musculus (Mouse).